The sequence spans 1227 residues: DNA-directed RNA polymerase subunit beta (1227 aa).

The protein belongs to the RNA polymerase beta chain family. In terms of assembly, the RNAP catalytic core consists of 2 alpha, 1 beta, 1 beta' and 1 omega subunit. When a sigma factor is associated with the core the holoenzyme is formed, which can initiate transcription.

The catalysed reaction is RNA(n) + a ribonucleoside 5'-triphosphate = RNA(n+1) + diphosphate. Functionally, DNA-dependent RNA polymerase catalyzes the transcription of DNA into RNA using the four ribonucleoside triphosphates as substrates. The polypeptide is DNA-directed RNA polymerase subunit beta (Chloroflexus aggregans (strain MD-66 / DSM 9485)).